The primary structure comprises 135 residues: Small ribosomal subunit protein eS24A (135 aa).

Residue Ser2 is modified to N-acetylserine. Residue Ser14 is modified to Phosphoserine. Lys21 participates in a covalent cross-link: Glycyl lysine isopeptide (Lys-Gly) (interchain with G-Cter in ubiquitin). Phosphoserine is present on Ser56. The tract at residues 102-135 (KASRQQRKQKKNRDKKIFGTGKRLAKKVARRNAD) is disordered. Basic residues-rich tracts occupy residues 105–115 (RQQRKQKKNRD) and 124–135 (RLAKKVARRNAD).

It belongs to the eukaryotic ribosomal protein eS24 family. As to quaternary structure, component of the small ribosomal subunit (SSU). Mature yeast ribosomes consist of a small (40S) and a large (60S) subunit. The 40S small subunit contains 1 molecule of ribosomal RNA (18S rRNA) and 33 different proteins (encoded by 57 genes). The large 60S subunit contains 3 rRNA molecules (25S, 5.8S and 5S rRNA) and 46 different proteins (encoded by 81 genes). In terms of processing, N-terminally acetylated by acetyltransferase NatA. Also partially acetylated by NatC.

The protein resides in the cytoplasm. Functionally, component of the ribosome, a large ribonucleoprotein complex responsible for the synthesis of proteins in the cell. The small ribosomal subunit (SSU) binds messenger RNAs (mRNAs) and translates the encoded message by selecting cognate aminoacyl-transfer RNA (tRNA) molecules. The large subunit (LSU) contains the ribosomal catalytic site termed the peptidyl transferase center (PTC), which catalyzes the formation of peptide bonds, thereby polymerizing the amino acids delivered by tRNAs into a polypeptide chain. The nascent polypeptides leave the ribosome through a tunnel in the LSU and interact with protein factors that function in enzymatic processing, targeting, and the membrane insertion of nascent chains at the exit of the ribosomal tunnel. This Saccharomyces cerevisiae (strain ATCC 204508 / S288c) (Baker's yeast) protein is Small ribosomal subunit protein eS24A.